Consider the following 838-residue polypeptide: Tuftelin-interacting protein 11 (838 aa).

The span at Met1–His13 shows a compositional bias: basic and acidic residues. The required for interaction with DHX15 stretch occupies residues Met1–Thr51. Disordered stretches follow at residues Met1 to Asp74 and Leu86 to Thr137. The residue at position 2 (Ser2) is a Phosphoserine. Over residues Leu14 to Asp29 the composition is skewed to acidic residues. The span at Gln45–Pro65 shows a compositional bias: basic and acidic residues. 3 positions are modified to phosphoserine: Ser60, Ser96, and Ser99. Residues Glu92–Ala101 are compositionally biased toward acidic residues. Basic and acidic residues predominate over residues Glu102–Pro117. A Phosphoserine modification is found at Ser145. The G-patch domain occupies Thr150–Ser196. A disordered region spans residues Ala193–Pro237. Ser211 carries the post-translational modification Phosphoserine. Positions Glu218–Gly232 are enriched in basic and acidic residues. A Nuclear localization signal motif is present at residues Val701 to Asn706. Positions Ile711–Leu735 are required for nuclear speckle localization.

The protein belongs to the TFP11/STIP family. Identified in the spliceosome C complex. Found in the Intron Large (IL) complex, a post-mRNA release spliceosomal complex containing the excised intron, U2, U5 and U6 snRNPs, and splicing factors. Interacts with TUFT1. Interacts with DHX15; indicative for a recruitment of DHX15 to the IL complex. Interacts with GCFC2. In terms of tissue distribution, widely expressed. In tooth it is expressed in ameloblasts and odontoblasts.

Its subcellular location is the cytoplasm. The protein resides in the nucleus. Its function is as follows. Involved in pre-mRNA splicing, specifically in spliceosome disassembly during late-stage splicing events. Intron turnover seems to proceed through reactions in two lariat-intron associated complexes termed Intron Large (IL) and Intron Small (IS). In cooperation with DHX15 seems to mediate the transition of the U2, U5 and U6 snRNP-containing IL complex to the snRNP-free IS complex leading to efficient debranching and turnover of excised introns. May play a role in the differentiation of ameloblasts and odontoblasts or in the forming of the enamel extracellular matrix. The chain is Tuftelin-interacting protein 11 (Tfip11) from Mus musculus (Mouse).